Here is a 4466-residue protein sequence, read N- to C-terminus: Dynein beta chain, ciliary (4466 aa).

Positions 1–1813 are stem; it reads MADVVDPRLE…YANICDAQFK (1813 aa). Position 154 to 161 (154 to 161) interacts with ATP; it reads AGQVKGKT. 4 coiled-coil regions span residues 733 to 805, 1036 to 1056, 1306 to 1337, and 1443 to 1468; these read TVLE…WTKQ, TLDQ…EADE, WLEI…AWDA, and LLKS…MTSK. AAA stretches follow at residues 1814–2035, 2095–2316, 2422–2669, and 2767–3016; these read YSYE…VLVV, KVVK…VRFK, ELDP…VFQG, and TYNE…ERRY. ATP-binding positions include 1852 to 1859, 2133 to 2140, 2460 to 2467, and 2805 to 2812; these read GPAGTGKT, GNAGTGKS, GNAGLGKS, and GVGGSGKQ. Coiled-coil stretches lie at residues 3033-3092, 3263-3325, and 3573-3642; these read SLLS…QVVG, EPKR…SRTI, and QERP…EEAK. A stalk region spans residues 3033-3325; sequence SLLSMKSKEL…QEAEATSRTI (293 aa). 2 AAA regions span residues 3409–3636 and 3846–4072; these read LTDD…EISV and VRNF…VLYN.

It belongs to the dynein heavy chain family. In terms of assembly, consists of at least two heavy chains (alpha and beta), three intermediate chains and several light chains.

It is found in the cell projection. It localises to the cilium. Its subcellular location is the flagellum. The protein localises to the cytoplasm. The protein resides in the cytoskeleton. It is found in the flagellum axoneme. In terms of biological role, force generating protein of eukaryotic cilia and flagella. Produces force towards the minus ends of microtubules. Dynein has ATPase activity; the force-producing power stroke is thought to occur on release of ADP. This is Dynein beta chain, ciliary from Tripneustes gratilla (Hawaian sea urchin).